The chain runs to 228 residues: Phosphoribosylformylglycinamidine synthase subunit PurQ (228 aa).

Residues 3–226 (FAVIVFPGSN…VKYWRETHVV (224 aa)) enclose the Glutamine amidotransferase type-1 domain. Catalysis depends on Cys86, which acts as the Nucleophile. Catalysis depends on residues His195 and Glu197.

As to quaternary structure, part of the FGAM synthase complex composed of 1 PurL, 1 PurQ and 2 PurS subunits.

The protein localises to the cytoplasm. The enzyme catalyses N(2)-formyl-N(1)-(5-phospho-beta-D-ribosyl)glycinamide + L-glutamine + ATP + H2O = 2-formamido-N(1)-(5-O-phospho-beta-D-ribosyl)acetamidine + L-glutamate + ADP + phosphate + H(+). It carries out the reaction L-glutamine + H2O = L-glutamate + NH4(+). Its pathway is purine metabolism; IMP biosynthesis via de novo pathway; 5-amino-1-(5-phospho-D-ribosyl)imidazole from N(2)-formyl-N(1)-(5-phospho-D-ribosyl)glycinamide: step 1/2. Its function is as follows. Part of the phosphoribosylformylglycinamidine synthase complex involved in the purines biosynthetic pathway. Catalyzes the ATP-dependent conversion of formylglycinamide ribonucleotide (FGAR) and glutamine to yield formylglycinamidine ribonucleotide (FGAM) and glutamate. The FGAM synthase complex is composed of three subunits. PurQ produces an ammonia molecule by converting glutamine to glutamate. PurL transfers the ammonia molecule to FGAR to form FGAM in an ATP-dependent manner. PurS interacts with PurQ and PurL and is thought to assist in the transfer of the ammonia molecule from PurQ to PurL. In Geobacillus sp. (strain WCH70), this protein is Phosphoribosylformylglycinamidine synthase subunit PurQ.